The primary structure comprises 153 residues: ATP synthase subunit b' (153 aa).

A helical membrane pass occupies residues 23–40 (LMAIQVVALTYILNSLFF).

The protein belongs to the ATPase B chain family. In terms of assembly, F-type ATPases have 2 components, F(1) - the catalytic core - and F(0) - the membrane proton channel. F(1) has five subunits: alpha(3), beta(3), gamma(1), delta(1), epsilon(1). F(0) has four main subunits: a(1), b(1), b'(1) and c(10-14). The alpha and beta chains form an alternating ring which encloses part of the gamma chain. F(1) is attached to F(0) by a central stalk formed by the gamma and epsilon chains, while a peripheral stalk is formed by the delta, b and b' chains.

The protein resides in the cellular thylakoid membrane. Functionally, f(1)F(0) ATP synthase produces ATP from ADP in the presence of a proton or sodium gradient. F-type ATPases consist of two structural domains, F(1) containing the extramembraneous catalytic core and F(0) containing the membrane proton channel, linked together by a central stalk and a peripheral stalk. During catalysis, ATP synthesis in the catalytic domain of F(1) is coupled via a rotary mechanism of the central stalk subunits to proton translocation. Its function is as follows. Component of the F(0) channel, it forms part of the peripheral stalk, linking F(1) to F(0). The b'-subunit is a diverged and duplicated form of b found in plants and photosynthetic bacteria. The protein is ATP synthase subunit b' of Prochlorococcus marinus (strain MIT 9515).